The primary structure comprises 592 residues: Aspartate--tRNA(Asp/Asn) ligase (592 aa).

E177 is a binding site for L-aspartate. The segment at 201 to 204 is aspartate; it reads QIFK. Residues R223 and H452 each coordinate L-aspartate. 223–225 lines the ATP pocket; the sequence is RDE. E486 contacts ATP. Residue R493 coordinates L-aspartate. 538–541 lines the ATP pocket; the sequence is GIDR.

This sequence belongs to the class-II aminoacyl-tRNA synthetase family. Type 1 subfamily. Homodimer.

It is found in the cytoplasm. The enzyme catalyses tRNA(Asx) + L-aspartate + ATP = L-aspartyl-tRNA(Asx) + AMP + diphosphate. Its function is as follows. Aspartyl-tRNA synthetase with relaxed tRNA specificity since it is able to aspartylate not only its cognate tRNA(Asp) but also tRNA(Asn). Reaction proceeds in two steps: L-aspartate is first activated by ATP to form Asp-AMP and then transferred to the acceptor end of tRNA(Asp/Asn). In Anaplasma marginale (strain Florida), this protein is Aspartate--tRNA(Asp/Asn) ligase.